The chain runs to 405 residues: Coiled-coil domain-containing protein 91 (405 aa).

The interval 1–16 (MDDDDFGGFEAAETFD) is GGA1-binding motif. The segment at 1–27 (MDDDDFGGFEAAETFDGGNGETQTTSP) is disordered. 2 positions are modified to phosphoserine: Ser43 and Ser46. Residues 126–376 (GANVSNIQLR…QKRLDQVIRQ (251 aa)) are a coiled coil. The homodimerization stretch occupies residues 210–377 (LSIIVDEYKH…KRLDQVIRQR (168 aa)).

In terms of assembly, homodimer. Interacts with GGA1, GGA2 and AP1G1.

It is found in the membrane. The protein localises to the golgi apparatus. It localises to the trans-Golgi network membrane. The protein resides in the trans-Golgi network. Its function is as follows. Involved in the regulation of membrane traffic through the trans-Golgi network (TGN). Functions in close cooperation with the GGAs in the sorting of hydrolases to lysosomes. The sequence is that of Coiled-coil domain-containing protein 91 (CCDC91) from Pongo abelii (Sumatran orangutan).